The chain runs to 66 residues: DNA-directed RNA polymerase subunit Rpo10 (66 aa).

Cys7, Cys10, Cys44, and Cys45 together coordinate Zn(2+).

This sequence belongs to the archaeal Rpo10/eukaryotic RPB10 RNA polymerase subunit family. Part of the RNA polymerase complex. Requires Zn(2+) as cofactor.

The protein resides in the cytoplasm. It carries out the reaction RNA(n) + a ribonucleoside 5'-triphosphate = RNA(n+1) + diphosphate. DNA-dependent RNA polymerase (RNAP) catalyzes the transcription of DNA into RNA using the four ribonucleoside triphosphates as substrates. This chain is DNA-directed RNA polymerase subunit Rpo10, found in Saccharolobus islandicus (strain Y.N.15.51 / Yellowstone #2) (Sulfolobus islandicus).